Reading from the N-terminus, the 432-residue chain is Monoacylglycerol lipase ABHD2 (432 aa).

At 1–14 (MNTHESEVYTVAPE) the chain is on the cytoplasmic side. The chain crosses the membrane as a helical; Signal-anchor for type II membrane protein span at residues 15–35 (MPAMFDGMKLAAVATVLYVIV). At 36–432 (RCLNLKSPTA…NQTTCQENTS (397 aa)) the chain is on the extracellular side. The region spanning 132-383 (TMVICPGIGN…HGGHLGFFEG (252 aa)) is the AB hydrolase-1 domain. Residue asparagine 141 is glycosylated (N-linked (GlcNAc...) asparagine). The active-site Nucleophile is serine 212. Asparagine 225 carries N-linked (GlcNAc...) asparagine glycosylation. Active-site charge relay system residues include aspartate 346 and histidine 377. Positions 413-432 (PPCQSKDAQSNQTTCQENTS) are disordered. Positions 418–432 (KDAQSNQTTCQENTS) are enriched in polar residues. Residue asparagine 423 is glycosylated (N-linked (GlcNAc...) asparagine).

Belongs to the AB hydrolase superfamily. AB hydrolase 4 family.

The protein localises to the cell membrane. It carries out the reaction Hydrolyzes glycerol monoesters of long-chain fatty acids.. The catalysed reaction is an acetyl ester + H2O = an aliphatic alcohol + acetate + H(+). It catalyses the reaction a triacylglycerol + H2O = a diacylglycerol + a fatty acid + H(+). The enzyme catalyses 2-(5Z,8Z,11Z,14Z-eicosatetraenoyl)-glycerol + H2O = glycerol + (5Z,8Z,11Z,14Z)-eicosatetraenoate + H(+). It carries out the reaction a butanoate ester + H2O = an aliphatic alcohol + butanoate + H(+). The catalysed reaction is hexadecanoate ester + H2O = an aliphatic alcohol + hexadecanoate + H(+). Acylglycerol lipase activity is activated upon binding to progesterone. Progesterone-dependent acylglycerol lipase that catalyzes hydrolysis of endocannabinoid arachidonoylglycerol (AG) from cell membrane. Acts as a progesterone receptor: progesterone-binding activates the acylglycerol lipase activity, mediating degradation of 1-arachidonoylglycerol (1AG) and 2-arachidonoylglycerol (2AG) to glycerol and arachidonic acid (AA). Also displays an ester hydrolase activity against acetyl ester, butanoate ester and hexadecanoate ester. Plays a key role in sperm capacitation in response to progesterone by mediating degradation of 2AG, an inhibitor of the sperm calcium channel CatSper, leading to calcium influx via CatSper and sperm activation. May also play a role in smooth muscle cells migration. The protein is Monoacylglycerol lipase ABHD2 (abhd2a) of Danio rerio (Zebrafish).